The chain runs to 240 residues: ATP-dependent dethiobiotin synthetase BioD (240 aa).

Residue 15–20 participates in ATP binding; that stretch reads EIGKTF. Thr-19 serves as a coordination point for Mg(2+). Lys-40 is a catalytic residue. Residues Asp-57, 118–121, and 178–179 contribute to the ATP site; these read EGVG and NR. Positions 57 and 118 each coordinate Mg(2+).

It belongs to the dethiobiotin synthetase family. Homodimer. It depends on Mg(2+) as a cofactor.

Its subcellular location is the cytoplasm. It carries out the reaction (7R,8S)-7,8-diammoniononanoate + CO2 + ATP = (4R,5S)-dethiobiotin + ADP + phosphate + 3 H(+). Its pathway is cofactor biosynthesis; biotin biosynthesis; biotin from 7,8-diaminononanoate: step 1/2. Functionally, catalyzes a mechanistically unusual reaction, the ATP-dependent insertion of CO2 between the N7 and N8 nitrogen atoms of 7,8-diaminopelargonic acid (DAPA, also called 7,8-diammoniononanoate) to form a ureido ring. This chain is ATP-dependent dethiobiotin synthetase BioD, found in Burkholderia thailandensis (strain ATCC 700388 / DSM 13276 / CCUG 48851 / CIP 106301 / E264).